A 437-amino-acid chain; its full sequence is UPF0597 protein Shal_0864 (437 aa).

This sequence belongs to the UPF0597 family.

The sequence is that of UPF0597 protein Shal_0864 from Shewanella halifaxensis (strain HAW-EB4).